A 120-amino-acid chain; its full sequence is Large ribosomal subunit protein uL18 (120 aa).

The interval Met-1–Gly-24 is disordered. Residues Ala-9–Ala-20 are compositionally biased toward basic residues.

The protein belongs to the universal ribosomal protein uL18 family. Part of the 50S ribosomal subunit; part of the 5S rRNA/L5/L18/L25 subcomplex. Contacts the 5S and 23S rRNAs.

This is one of the proteins that bind and probably mediate the attachment of the 5S RNA into the large ribosomal subunit, where it forms part of the central protuberance. The sequence is that of Large ribosomal subunit protein uL18 from Bacillus mycoides (strain KBAB4) (Bacillus weihenstephanensis).